Consider the following 153-residue polypeptide: Arginine repressor (153 aa).

This sequence belongs to the ArgR family.

The protein resides in the cytoplasm. The protein operates within amino-acid biosynthesis; L-arginine biosynthesis [regulation]. Regulates arginine biosynthesis genes. This chain is Arginine repressor, found in Clostridium tetani (strain Massachusetts / E88).